A 705-amino-acid chain; its full sequence is Probable glutamate carboxypeptidase AMP1 (705 aa).

Residues methionine 1 to proline 24 are Cytoplasmic-facing. A helical; Signal-anchor for type II membrane protein membrane pass occupies residues leucine 25–leucine 42. At histidine 43 to threonine 705 the chain is on the extracellular side. N-linked (GlcNAc...) asparagine glycosylation is found at asparagine 74, asparagine 137, and asparagine 322. Residues glycine 255–leucine 548 are catalytic. Residues histidine 356 and aspartate 366 each contribute to the Zn(2+) site. The active-site Nucleophile is the glutamate 403. Residues glutamate 404, aspartate 432, and histidine 514 each contribute to the Zn(2+) site. N-linked (GlcNAc...) asparagine glycosylation is present at asparagine 676.

Belongs to the peptidase M28 family. M28B subfamily. Zn(2+) serves as cofactor. As to expression, expressed in all plant parts. Highest levels in the bolt stem, inflorescence, root and silique. Low level in leaves.

Its subcellular location is the endoplasmic reticulum membrane. It carries out the reaction Release of an unsubstituted, C-terminal glutamyl residue, typically from Ac-Asp-Glu or folylpoly-gamma-glutamates.. Its function is as follows. May modulate the level of one or more small signaling molecules that have a role in regulating meristem function. May play a role in balancing and restricting the meristem-promoting activity of auxin signaling. Involved in ethylene and giberellin (GA) signaling pathways or in a parallel pathway controlling cell and hypocotyl elongation and cellular organization. Involved in abscisic acid (ABA) signaling pathway. Plays a negative role in ABA-mediated seed germination and seedling development. Acts in association with LAMP1 to suppress ectopic stem cell niche formation in the shoot apical meristem (SAM) independently of cytokinin signaling pathway. Modulates responses to ABA, oxidative stress and abotic stress. Acts as a negative regulator of the ABA signaling pathway to modulate freezing and drought stress responses. Mediates carbon and amino acid metabolism. May be involved in the acquisition and/or maintenance of seed dormancy. Involved in the regulation of response to heat shock and plant defense. The sequence is that of Probable glutamate carboxypeptidase AMP1 from Arabidopsis thaliana (Mouse-ear cress).